Here is a 72-residue protein sequence, read N- to C-terminus: UPF0352 protein CGSHiGG_07710 (72 aa).

This sequence belongs to the UPF0352 family.

In Haemophilus influenzae (strain PittGG), this protein is UPF0352 protein CGSHiGG_07710.